A 298-amino-acid chain; its full sequence is Nucleotide-binding protein MLBr00563 (298 aa).

21–28 (GLSGAGRG) lines the ATP pocket. Residue 72–75 (DVRS) participates in GTP binding.

This sequence belongs to the RapZ-like family.

Functionally, displays ATPase and GTPase activities. In Mycobacterium leprae (strain Br4923), this protein is Nucleotide-binding protein MLBr00563.